The following is a 980-amino-acid chain: Valine--tRNA ligase (980 aa).

Residues Met-1–Leu-40 form a disordered region. A compositionally biased stretch (basic and acidic residues) spans Pro-22–Leu-40. The 'HIGH' region motif lies at Pro-139–His-149. The 'KMSKS' region motif lies at Lys-652–Ser-656. Position 655 (Lys-655) interacts with ATP.

This sequence belongs to the class-I aminoacyl-tRNA synthetase family.

Its subcellular location is the cytoplasm. It catalyses the reaction tRNA(Val) + L-valine + ATP = L-valyl-tRNA(Val) + AMP + diphosphate. This chain is Valine--tRNA ligase (vas2), found in Schizosaccharomyces pombe (strain 972 / ATCC 24843) (Fission yeast).